A 354-amino-acid polypeptide reads, in one-letter code: DnaJ homolog shv (354 aa).

The signal sequence occupies residues 1-22 (MQLIKCLVIIQLSLLLVEESFA). The J domain maps to 25-90 (DFYKILNVKK…DKRKTYDRCG (66 aa)). N-linked (GlcNAc...) asparagine glycosylation is found at N260 and N312.

In terms of tissue distribution, in the testes, detected at low levels in somatic hub cells, cyst stem cells and the apical tip (at protein level). Levels in the testes decrease with age (at protein level). Expressed at low levels in hub cells, cyst stem cells and germline stem cells, and at high levels in spermatocytes and cyst cells.

Its subcellular location is the nucleus. It is found in the cell membrane. The protein resides in the secreted. Functionally, maintains stem cell niche architecture in the testes. Activates an extracellular integrin beta-PS pathway which regulates DE-cadherin (shg) levels in somatic hub cells, and is essential for maintaining the number of germline stem cells and the structure and localization of hub cells. The protein is DnaJ homolog shv of Drosophila melanogaster (Fruit fly).